We begin with the raw amino-acid sequence, 301 residues long: Rhodopsin (301 aa).

Residues Leu1 to Met18 lie on the Extracellular side of the membrane. Residues Tyr19–Val43 form a helical membrane-spanning segment. The Cytoplasmic segment spans residues Phe44–Asn55. A helical transmembrane segment spans residues Leu56–Val78. The Extracellular segment spans residues Thr79–Cys92. A disulfide bond links Cys92 and Cys169. Residues Gln93–Phe115 traverse the membrane as a helical segment. Residues Asp116 to Tyr118 carry the 'Ionic lock' involved in activated form stabilization motif. Residues Asp116–Lys134 are Cytoplasmic-facing. The helical transmembrane segment at Ala135–Phe155 threads the bilayer. Residues Gly156–Ser182 lie on the Extracellular side of the membrane. Asn165 carries N-linked (GlcNAc...) asparagine glycosylation. A helical transmembrane segment spans residues Tyr183–Val204. The Cytoplasmic segment spans residues Phe205 to Lys245. A helical transmembrane segment spans residues Asn246 to Val267. The Extracellular segment spans residues Gly268–Val278. A helical membrane pass occupies residues Tyr279–Ile300. Position 288 is an N6-(retinylidene)lysine (Lys288).

This sequence belongs to the G-protein coupled receptor 1 family. Opsin subfamily. As to quaternary structure, homodimer. Interacts with GNAQ. In terms of processing, contains one covalently linked retinal chromophore.

It localises to the cell projection. The protein localises to the rhabdomere membrane. Its function is as follows. Photoreceptor required for image-forming vision at low light intensity. Can use both retinal and 3-dehydroretinal as visual pigment. Light-induced isomerization of 11-cis to all-trans retinal triggers a conformational change that activates signaling via G-proteins. Signaling via GNAQ probably mediates the activation of phospholipase C. In Cambarus hubrichti (Salem cave crayfish), this protein is Rhodopsin (RHO).